The chain runs to 75 residues: UPF0352 protein plu2871 (75 aa).

The protein belongs to the UPF0352 family.

This Photorhabdus laumondii subsp. laumondii (strain DSM 15139 / CIP 105565 / TT01) (Photorhabdus luminescens subsp. laumondii) protein is UPF0352 protein plu2871.